The primary structure comprises 546 residues: Nuclear rim protein 1 (546 aa).

Composition is skewed to basic and acidic residues over residues 1–10 and 25–35; these read MAFWRNRHES and QNSEDIREDNN. Residues 1 to 35 are disordered; it reads MAFWRNRHESPAISQERSPSPDRFQNSEDIREDNN. The next 2 membrane-spanning stretches (helical) occupy residues 155-175 and 249-269; these read FYLL…RYLF and FLTS…WMTD. 2 disordered regions span residues 405 to 441 and 505 to 546; these read YPSR…PSQQ and RQGY…SPFR. The span at 406-441 shows a compositional bias: polar residues; the sequence is PSRQHSPRLSPSRYSHLQSGNTPSAPSTPLLIPSQQ. The segment covering 533–546 has biased composition (low complexity); the sequence is SKSPFRNSSSSPFR.

Belongs to the NUR1 family.

It is found in the nucleus membrane. Functionally, member of a perinuclear network that controls recombination at multiple loci to maintain genome stability. Required for rDNA repeat stability. The chain is Nuclear rim protein 1 (NUR1) from Kluyveromyces lactis (strain ATCC 8585 / CBS 2359 / DSM 70799 / NBRC 1267 / NRRL Y-1140 / WM37) (Yeast).